A 434-amino-acid chain; its full sequence is Gamma-glutamyl phosphate reductase (434 aa).

The span at Met1–Ala11 shows a compositional bias: polar residues. Residues Met1 to Lys26 are disordered. A compositionally biased stretch (basic and acidic residues) spans Arg16–Ala25.

Belongs to the gamma-glutamyl phosphate reductase family.

It is found in the cytoplasm. It carries out the reaction L-glutamate 5-semialdehyde + phosphate + NADP(+) = L-glutamyl 5-phosphate + NADPH + H(+). It functions in the pathway amino-acid biosynthesis; L-proline biosynthesis; L-glutamate 5-semialdehyde from L-glutamate: step 2/2. In terms of biological role, catalyzes the NADPH-dependent reduction of L-glutamate 5-phosphate into L-glutamate 5-semialdehyde and phosphate. The product spontaneously undergoes cyclization to form 1-pyrroline-5-carboxylate. This chain is Gamma-glutamyl phosphate reductase, found in Corynebacterium jeikeium (strain K411).